Consider the following 450-residue polypeptide: MSTHVTFDYSKALSFISEHELTYLRDAVKVSHHAIHEKTGAGNDFLGWVDLPLAYDKEEFIRIQKCAEKIKNDSDILLVIGIGGSYLGARAAIEMLNHSFYNMLSKEQRKTPQVLFVGQNISSTYMKDLMDVLEGKDFSINVISKSGTTTEPAIAFRLFRKLLEDKYGKEEARKRIYATTDKARGALKTLADEEGYETFVIPDDVGGRFSVLTPVGLLPIAVSGLSIEEMMQGAAAGCNDFAKSELEENPAYQYAVVRNALYNKGKTIEMLVNYEPALQYFAEWWKQLFGESEGKDQKGIFPSSANFSTDLHSLGQYIQEGRRDLFETVLKVGKPTHELTIELDESDLDGLNYLAGKTVDFVNTKAYEGTLLAHSDGGVPNLIVNIPELNEYTFGYLVYFFEKACAMSGYLLGVNPFDQPGVEAYKKNMFALLGKPGFEELKAELEERLK.

Thr-39 bears the Phosphothreonine mark. Glu-291 (proton donor) is an active-site residue. Active-site residues include His-312 and Lys-426.

Belongs to the GPI family.

The protein resides in the cytoplasm. It carries out the reaction alpha-D-glucose 6-phosphate = beta-D-fructose 6-phosphate. It participates in carbohydrate biosynthesis; gluconeogenesis. The protein operates within carbohydrate degradation; glycolysis; D-glyceraldehyde 3-phosphate and glycerone phosphate from D-glucose: step 2/4. Catalyzes the reversible isomerization of glucose-6-phosphate to fructose-6-phosphate. The sequence is that of Glucose-6-phosphate isomerase from Bacillus cytotoxicus (strain DSM 22905 / CIP 110041 / 391-98 / NVH 391-98).